The chain runs to 160 residues: Large ribosomal subunit protein uL16 (160 aa).

This sequence belongs to the universal ribosomal protein uL16 family. As to quaternary structure, part of the 50S ribosomal subunit.

Its function is as follows. Binds 23S rRNA and is also seen to make contacts with the A and possibly P site tRNAs. The sequence is that of Large ribosomal subunit protein uL16 from Prochlorococcus marinus (strain MIT 9301).